The chain runs to 436 residues: 3-ketoacyl-CoA thiolase (436 aa).

The active-site Acyl-thioester intermediate is the cysteine 99. Catalysis depends on proton acceptor residues histidine 392 and cysteine 422.

This sequence belongs to the thiolase-like superfamily. Thiolase family. Heterotetramer of two alpha chains (FadJ) and two beta chains (FadI).

It is found in the cytoplasm. The catalysed reaction is an acyl-CoA + acetyl-CoA = a 3-oxoacyl-CoA + CoA. The protein operates within lipid metabolism; fatty acid beta-oxidation. Functionally, catalyzes the final step of fatty acid oxidation in which acetyl-CoA is released and the CoA ester of a fatty acid two carbons shorter is formed. The protein is 3-ketoacyl-CoA thiolase of Salmonella schwarzengrund (strain CVM19633).